The sequence spans 420 residues: uncharacterized protein (420 aa).

This is an uncharacterized protein from Pseudanabaena tenuis (strain PCC 7409).